The primary structure comprises 56 residues: Ovomucoid (56 aa).

A Kazal-like domain is found at 6 to 56 (VDCSEYPKPACMSEYRPLCGSDNKTYVNKCNFCNAVVESNGTLTLSHFGKC). Disulfide bonds link Cys-8/Cys-38, Cys-16/Cys-35, and Cys-24/Cys-56. An N-linked (GlcNAc...) asparagine glycan is attached at Asn-45.

It is found in the secreted. In Colinus virginianus (Northern bobwhite), this protein is Ovomucoid.